A 142-amino-acid chain; its full sequence is HTH-type transcriptional regulator LysM (142 aa).

One can recognise an HTH asnC-type domain in the interval 6 to 69; it reads IDESDLKILE…ELENEIRAIV (64 aa). The segment at residues 25 to 44 is a DNA-binding region (H-T-H motif); the sequence is YTLIAKELKVSEAAIRKRIE.

Homotetramer.

It is found in the cytoplasm. The protein operates within amino-acid biosynthesis; L-lysine biosynthesis via AAA pathway [regulation]. In terms of biological role, in the absence or at low concentrations of lysine, activates the biosynthesis of this amino acid via the alpha-aminoadipate (AAA) pathway. This Saccharolobus solfataricus (strain ATCC 35092 / DSM 1617 / JCM 11322 / P2) (Sulfolobus solfataricus) protein is HTH-type transcriptional regulator LysM (lysM).